Reading from the N-terminus, the 225-residue chain is Protein-L-isoaspartate O-methyltransferase (225 aa).

Serine 75 is a catalytic residue.

This sequence belongs to the methyltransferase superfamily. L-isoaspartyl/D-aspartyl protein methyltransferase family.

It is found in the cytoplasm. It carries out the reaction [protein]-L-isoaspartate + S-adenosyl-L-methionine = [protein]-L-isoaspartate alpha-methyl ester + S-adenosyl-L-homocysteine. Its function is as follows. Catalyzes the methyl esterification of L-isoaspartyl residues in peptides and proteins that result from spontaneous decomposition of normal L-aspartyl and L-asparaginyl residues. It plays a role in the repair and/or degradation of damaged proteins. The sequence is that of Protein-L-isoaspartate O-methyltransferase from Xanthomonas euvesicatoria pv. vesicatoria (strain 85-10) (Xanthomonas campestris pv. vesicatoria).